Reading from the N-terminus, the 840-residue chain is Heat shock 70 kDa protein 4 (840 aa).

Residue lysine 53 is modified to N6-acetyllysine. Serine 76 is modified (phosphoserine). Phosphotyrosine is present on residues tyrosine 89 and tyrosine 336. A phosphoserine mark is found at serine 393 and serine 415. At lysine 430 the chain carries N6-acetyllysine. Positions 500–575 (VHKSEESEEP…QAKKAKVKTS (76 aa)) are disordered. Over residues 514-533 (QNAKEEEKMQVDQEEPHTEE) the composition is skewed to basic and acidic residues. Threonine 538 carries the phosphothreonine modification. Serine 546 carries the post-translational modification Phosphoserine. Tyrosine 660 carries the post-translational modification Phosphotyrosine. Serine 756 is modified (phosphoserine). Lysine 773 bears the N6-methyllysine mark. The segment at 781–840 (PIISKPKPKVEPPKEEPKHAEQNGPVDGQGDNPGTQAAEHGADTAVPSDGDKKLPEMDID) is disordered. Composition is skewed to basic and acidic residues over residues 788–801 (PKVE…KHAE) and 829–840 (DGDKKLPEMDID).

The protein belongs to the heat shock protein 70 family. As to quaternary structure, interacts with TJP1/ZO-1. Ubiquitous. Highly expressed in testis.

It is found in the cytoplasm. In Rattus norvegicus (Rat), this protein is Heat shock 70 kDa protein 4 (Hspa4).